The primary structure comprises 262 residues: Dehydrin COR410 (262 aa).

2 disordered regions span residues 1–153 and 187–262; these read MEDE…HDTD and LPGG…KPSA. 2 stretches are compositionally biased toward basic and acidic residues: residues 34 to 45 and 53 to 74; these read KKAEEDKEKEEE and VSVE…KETL. Positions 89–101 are enriched in acidic residues; the sequence is SDEEEEEVIDDNG. 2 repeat units span residues 106 to 126 and 173 to 193. Residues 106–245 form a 3 X 21 AA repeats, Lys-rich region; it reads RKKKKGLKEK…MDKLPGYHKT (140 aa). Composition is skewed to basic and acidic residues over residues 113-130 and 187-196; these read KEKL…EGEH and LPGGHKKPED. The span at 197–209 shows a compositional bias: low complexity; the sequence is AAAVPVTHAAPAP. Repeat unit 3 spans residues 225–245; sequence AKEKKGLLGKIMDKLPGYHKT. Over residues 244-262 the composition is skewed to basic and acidic residues; it reads KTGEEDKAAAATGEHKPSA.

As to expression, expressed in roots, crown and leaves during cold acclimation.

The sequence is that of Dehydrin COR410 (COR410) from Triticum aestivum (Wheat).